Here is a 178-residue protein sequence, read N- to C-terminus: Fatty-acid and retinol-binding protein 1 (178 aa).

Positions Met-1–Ala-16 are cleaved as a signal peptide. Coiled coils occupy residues Asp-67–Asn-89 and Lys-130–Val-153.

Belongs to the fatty-acid and retinol-binding protein (FARBP) family. Not glycosylated.

The protein localises to the secreted. Binds retinol and different fatty acids. This is Fatty-acid and retinol-binding protein 1 from Brugia pahangi (Filarial nematode worm).